The sequence spans 319 residues: tRNA uridine(34) hydroxylase (319 aa).

The region spanning 127-221 (KQEDTVIIDA…YGKDPEVQGE (95 aa)) is the Rhodanese domain. Cys181 (cysteine persulfide intermediate) is an active-site residue.

It belongs to the TrhO family.

The enzyme catalyses uridine(34) in tRNA + AH2 + O2 = 5-hydroxyuridine(34) in tRNA + A + H2O. Catalyzes oxygen-dependent 5-hydroxyuridine (ho5U) modification at position 34 in tRNAs. In Bacillus cereus (strain Q1), this protein is tRNA uridine(34) hydroxylase.